A 1128-amino-acid chain; its full sequence is DNA-directed RNA polymerase subunit Rpo2 (1128 aa).

DsDNA-binding positions include lysine 178, 181 to 182 (SN), lysine 206, 435 to 439 (RGQPN), and 1027 to 1032 (RFGEME). Cysteine 1061, cysteine 1064, cysteine 1079, and histidine 1082 together coordinate Zn(2+).

This sequence belongs to the RNA polymerase beta chain family. In terms of assembly, part of the 13-subunit RNA polymerase complex. Zn(2+) is required as a cofactor.

Its subcellular location is the cytoplasm. It catalyses the reaction RNA(n) + a ribonucleoside 5'-triphosphate = RNA(n+1) + diphosphate. Its function is as follows. DNA-dependent RNA polymerase (RNAP) catalyzes the transcription of DNA into RNA using the four ribonucleoside triphosphates as substrates. This subunit is involved in DNA promoter recognition. The protein is DNA-directed RNA polymerase subunit Rpo2 of Saccharolobus shibatae (strain ATCC 51178 / DSM 5389 / JCM 8931 / NBRC 15437 / B12) (Sulfolobus shibatae).